Here is a 355-residue protein sequence, read N- to C-terminus: Methylthioribose-1-phosphate isomerase (355 aa).

Substrate-binding positions include Arg-47–Ala-49, Arg-90, and Gln-197. Asp-238 acts as the Proton donor in catalysis. Residue Asn-248 to Lys-249 participates in substrate binding.

It belongs to the eIF-2B alpha/beta/delta subunits family. MtnA subfamily.

It carries out the reaction 5-(methylsulfanyl)-alpha-D-ribose 1-phosphate = 5-(methylsulfanyl)-D-ribulose 1-phosphate. It functions in the pathway amino-acid biosynthesis; L-methionine biosynthesis via salvage pathway; L-methionine from S-methyl-5-thio-alpha-D-ribose 1-phosphate: step 1/6. Functionally, catalyzes the interconversion of methylthioribose-1-phosphate (MTR-1-P) into methylthioribulose-1-phosphate (MTRu-1-P). This Herpetosiphon aurantiacus (strain ATCC 23779 / DSM 785 / 114-95) protein is Methylthioribose-1-phosphate isomerase.